Consider the following 281-residue polypeptide: UPF0294 protein VP2298 (281 aa).

The protein belongs to the UPF0294 family.

The protein localises to the cytoplasm. The polypeptide is UPF0294 protein VP2298 (Vibrio parahaemolyticus serotype O3:K6 (strain RIMD 2210633)).